The sequence spans 191 residues: Lipopolysaccharide export system protein LptC (191 aa).

The helical transmembrane segment at tryptophan 7–alanine 25 threads the bilayer.

The protein belongs to the LptC family. As to quaternary structure, component of the lipopolysaccharide transport and assembly complex. Interacts with LptA and the LptBFG transporter complex.

The protein localises to the cell inner membrane. Functionally, involved in the assembly of lipopolysaccharide (LPS). Required for the translocation of LPS from the inner membrane to the outer membrane. Facilitates the transfer of LPS from the inner membrane to the periplasmic protein LptA. Could be a docking site for LptA. The protein is Lipopolysaccharide export system protein LptC of Escherichia coli O157:H7.